We begin with the raw amino-acid sequence, 469 residues long: 3-isopropylmalate dehydratase large subunit (469 aa).

[4Fe-4S] cluster is bound by residues Cys-350, Cys-410, and Cys-413.

It belongs to the aconitase/IPM isomerase family. LeuC type 1 subfamily. As to quaternary structure, heterodimer of LeuC and LeuD. [4Fe-4S] cluster serves as cofactor.

The enzyme catalyses (2R,3S)-3-isopropylmalate = (2S)-2-isopropylmalate. Its pathway is amino-acid biosynthesis; L-leucine biosynthesis; L-leucine from 3-methyl-2-oxobutanoate: step 2/4. Its function is as follows. Catalyzes the isomerization between 2-isopropylmalate and 3-isopropylmalate, via the formation of 2-isopropylmaleate. This Agrobacterium fabrum (strain C58 / ATCC 33970) (Agrobacterium tumefaciens (strain C58)) protein is 3-isopropylmalate dehydratase large subunit.